Here is a 92-residue protein sequence, read N- to C-terminus: Small ribosomal subunit protein uS19c (92 aa).

This sequence belongs to the universal ribosomal protein uS19 family.

It localises to the plastid. The protein resides in the chloroplast. Its function is as follows. Protein S19 forms a complex with S13 that binds strongly to the 16S ribosomal RNA. The protein is Small ribosomal subunit protein uS19c (rps19) of Anthoceros angustus (Hornwort).